The primary structure comprises 196 residues: Phosphate-specific transport system accessory protein PhoU homolog (196 aa).

Belongs to the PhoU family. Homodimer.

The protein resides in the cytoplasm. Functionally, plays a role in the regulation of phosphate uptake. The chain is Phosphate-specific transport system accessory protein PhoU homolog from Archaeoglobus fulgidus (strain ATCC 49558 / DSM 4304 / JCM 9628 / NBRC 100126 / VC-16).